Here is a 782-residue protein sequence, read N- to C-terminus: Chaoptin (782 aa).

LRR repeat units follow at residues 16-37 (SLLTLKLTHALSSSVQNFPSDA), 43-64 (RLEELDLSNNRLRNVPDNSFHF), 67-88 (SLKKVHLQDNTIEMIHRGTFQG), 93-114 (DLTEVYFSFNSVRNVQQHTFAD), 117-138 (QLEQIHLDDNRIESLERRAFMN), 141-162 (SLKRLNLKGNKIATIAYETFQN), 165-186 (ELEDLDLAYNSISSLDFNIFDQ), 191-212 (GMFHVNMSHNKLINLVVAPSVP), 224-245 (NIKVLDLSFNNITSVAKQFFRP), 249-270 (SLMQLYLGHNKLLNATKDLFGN), 273-294 (HLQVLDLSHNSLYELDFDTFRN), 297-318 (KLQWLDTSHNRISEIPNDLFRF), 321-342 (NLRIVDFSHNRLRSLPDNLFRE), 344-364 (GLERLDVSHNLLGKLPLTSLS), 370-391 (TLSELDLSWNSISSLSHGGQLA), 395-416 (CLSWLDLSYNRLGQIDAGTFKG), 419-442 (RLASLNLGHNSQLTLEINGLSFQG), 446-467 (TLLHLNLDNVSLSQVPALSTPN), 468-488 (LLSLSLAFNSLPTVALEVAGN), 491-512 (SLRYLNLDYNDLSAVPIVTHSL), 514-535 (ELRHLSLEGNPITTLSNTSLLG), and 539-560 (QLEELNLKNIDLTVLESGAFCK). Asn-196, Asn-234, and Asn-262 each carry an N-linked (GlcNAc...) asparagine glycan. 2 N-linked (GlcNAc...) asparagine glycosylation sites follow: Asn-454 and Asn-488. Residue Asn-530 is glycosylated (N-linked (GlcNAc...) asparagine). Asn-618, Asn-648, and Asn-667 each carry an N-linked (GlcNAc...) asparagine glycan.

The protein belongs to the chaoptin family.

It localises to the cell membrane. In terms of biological role, required for photoreceptor cell morphogenesis. Mediates homophilic cellular adhesion. The polypeptide is Chaoptin (CHP) (Tribolium castaneum (Red flour beetle)).